The chain runs to 61 residues: MAKVSMINKSQRTPKFKVRQHNRCPVCGRPKAFYRKFQMCRICLRKYASAGQIPGVIKSSW.

Positions 24, 27, 40, and 43 each coordinate Zn(2+).

The protein belongs to the universal ribosomal protein uS14 family. Zinc-binding uS14 subfamily. Part of the 30S ribosomal subunit. Contacts proteins S3 and S10. The cofactor is Zn(2+).

Binds 16S rRNA, required for the assembly of 30S particles and may also be responsible for determining the conformation of the 16S rRNA at the A site. This Trichlorobacter lovleyi (strain ATCC BAA-1151 / DSM 17278 / SZ) (Geobacter lovleyi) protein is Small ribosomal subunit protein uS14.